Reading from the N-terminus, the 132-residue chain is Small ribosomal subunit protein uS8 (132 aa).

Belongs to the universal ribosomal protein uS8 family. As to quaternary structure, part of the 30S ribosomal subunit. Contacts proteins S5 and S12.

Functionally, one of the primary rRNA binding proteins, it binds directly to 16S rRNA central domain where it helps coordinate assembly of the platform of the 30S subunit. This Limosilactobacillus reuteri (strain DSM 20016) (Lactobacillus reuteri) protein is Small ribosomal subunit protein uS8.